A 1050-amino-acid chain; its full sequence is Mitotic checkpoint serine/threonine-protein kinase BUB1 beta (1050 aa).

A BUB1 N-terminal domain is found at 62–226 (FEYEIRFYTG…FESSVPQRST (165 aa)). Residues 111–118 (GEKRYYSD) carry the Nuclear localization signal motif. Residues 152-185 (AQFYISWAEEYEARENFRKADAIFQEGIQQKAEP) are necessary for interaction with KNL1. The D-box signature appears at 224 to 232 (RSTLAELKS). Residue Lys250 is modified to N6-acetyllysine; by PCAF. Ser367 carries the post-translational modification Phosphoserine. Residues 368–393 (TRKPGKEEGDPLQRVQSHQQASEEKK) are disordered. The residue at position 435 (Ser435) is a Phosphoserine. The disordered stretch occupies residues 456–480 (IQTTQQERTGDQQEETMPTKETTKL). Phosphoserine occurs at positions 543, 665, and 670. Ser676 is subject to Phosphoserine; by PLK1. Ser697 is modified (phosphoserine). The 285-residue stretch at 766–1050 (YCIKREYLIC…LTSPGALLFQ (285 aa)) folds into the Protein kinase domain. 772 to 780 (YLICEDYKL) serves as a coordination point for ATP. Thr792 carries the phosphothreonine; by PLK1 modification. Lys795 lines the ATP pocket. The Proton acceptor role is filled by Asp882. Thr1008 carries the phosphothreonine; by PLK1 modification. Thr1042 carries the post-translational modification Phosphothreonine. The residue at position 1043 (Ser1043) is a Phosphoserine.

Belongs to the protein kinase superfamily. Ser/Thr protein kinase family. BUB1 subfamily. Interacts with CENPE. Interacts with PLK1. Part of a complex containing BUB3, CDC20 and BUB1B. Interacts with anaphase-promoting complex/cyclosome (APC/C). Interacts with KNL1. Interacts with KAT2B. Interacts with RIPK3. Interacts with the closed conformation form of MAD2L1. Proteolytically cleaved by caspase-3 in a cell cycle specific manner. The cleavage might be involved in the durability of the cell cycle delay. Caspase-3 cleavage is associated with abrogation of the mitotic checkpoint. The major site of cleavage is at Asp-610. In terms of processing, acetylation at Lys-250 regulates its degradation and timing in anaphase entry. Post-translationally, ubiquitinated. Degraded by the proteasome. Ubiquitinated by UBR5, promoting disassembly of the mitotic checkpoint complex from the APC/C complex. Sumoylated with SUMO2 and SUMO3. The sumoylation mediates the association with CENPE at the kinetochore. In terms of processing, autophosphorylated in vitro. Intramolecular autophosphorylation is stimulated by CENPE. Phosphorylated during mitosis and hyperphosphorylated in mitotically arrested cells. Phosphorylation at Ser-670 and Ser-1043 occurs at kinetochores upon mitotic entry with dephosphorylation at the onset of anaphase. Highly expressed in thymus followed by spleen. Preferentially expressed in tissues with a high mitotic index.

It is found in the cytoplasm. The protein localises to the nucleus. It localises to the chromosome. The protein resides in the centromere. Its subcellular location is the kinetochore. It is found in the cytoskeleton. The protein localises to the microtubule organizing center. It localises to the centrosome. The enzyme catalyses L-seryl-[protein] + ATP = O-phospho-L-seryl-[protein] + ADP + H(+). It carries out the reaction L-threonyl-[protein] + ATP = O-phospho-L-threonyl-[protein] + ADP + H(+). With respect to regulation, kinase activity stimulated by CENPE. In terms of biological role, essential component of the mitotic checkpoint. Required for normal mitosis progression. The mitotic checkpoint delays anaphase until all chromosomes are properly attached to the mitotic spindle. One of its checkpoint functions is to inhibit the activity of the anaphase-promoting complex/cyclosome (APC/C) by blocking the binding of CDC20 to APC/C, independently of its kinase activity. The other is to monitor kinetochore activities that depend on the kinetochore motor CENPE. Required for kinetochore localization of CENPE. Negatively regulates PLK1 activity in interphase cells and suppresses centrosome amplification. Also implicated in triggering apoptosis in polyploid cells that exit aberrantly from mitotic arrest. May play a role for tumor suppression. This Homo sapiens (Human) protein is Mitotic checkpoint serine/threonine-protein kinase BUB1 beta (BUB1B).